The chain runs to 370 residues: 3,5-dihydroxyphenylacetyl-CoA synthase (370 aa).

Cys-158 is an active-site residue.

This sequence belongs to the thiolase-like superfamily. Chalcone/stilbene synthases family.

It catalyses the reaction 4 malonyl-CoA + 4 H(+) = (3,5-dihydroxyphenyl)acetyl-CoA + 4 CO2 + 3 CoA + H2O. Its pathway is antibiotic biosynthesis; vancomycin biosynthesis. Involved in the biosynthesis of the nonproteinogenic amino acid monomer (S)-3,5-dihydroxyphenylglycine (Dpg) responsible of the production of vancomycin and teicoplanin antibiotics. Catalyzes the Claisen condensation of four molecules of malonyl-CoA to yield 3,5-dihydroxyphenylacetyl-CoA (DPA-CoA) and three free coenzyme A (CoA). DpgA requires the presence of the dehydratases DpgB and DpgD to facilitate the aromatization of the DPA-S-DgpA or DPA-S-CoA intermediate. This chain is 3,5-dihydroxyphenylacetyl-CoA synthase (dpgA), found in Amycolatopsis orientalis (Nocardia orientalis).